A 29-amino-acid chain; its full sequence is Toxin Bcg III 15.67 (29 aa).

An EGF-like domain is found at 2–29 (QGTACTGEHAHSFCLNGGTCRHIQQLGE). Cys-6 and Cys-21 are disulfide-bonded.

The protein localises to the secreted. It is found in the nematocyst. Has both toxic and EGF activity. This chain is Toxin Bcg III 15.67, found in Bunodosoma cangicum (Sea anemone).